We begin with the raw amino-acid sequence, 361 residues long: Probable cysteine protease RD19B (361 aa).

An N-terminal signal peptide occupies residues 1–24 (MDYHLRVLFSVSLIFVFVSVSVCG). Residues 25–131 (DEDVLIRQVV…NQAPILPTQN (107 aa)) constitute a propeptide, activation peptide. Disulfide bonds link C153–C203 and C187–C237. Residue C156 is part of the active site. N-linked (GlcNAc...) asparagine glycosylation occurs at N250. The cysteines at positions 293 and 347 are disulfide-linked. Active-site residues include H299 and N326.

Belongs to the peptidase C1 family.

The protein localises to the lytic vacuole. Probable thiol protease. This chain is Probable cysteine protease RD19B, found in Arabidopsis thaliana (Mouse-ear cress).